Consider the following 863-residue polypeptide: Bifunctional uridylyltransferase/uridylyl-removing enzyme (863 aa).

The interval 1–328 is uridylyltransferase; sequence MLFPLSLSSP…SSNQATVIEQ (328 aa). The tract at residues 329-687 is uridylyl-removing; the sequence is LDDDFQLINQ…ISNRFSLGGT (359 aa). Residues 446–568 enclose the HD domain; that stretch reads VDEHTLRVML…VQNQVRLDYL (123 aa). 2 ACT domains span residues 688–772 and 794–863; these read EVFI…PNRQ and EMEL…RNIG.

Belongs to the GlnD family. Mg(2+) serves as cofactor.

The enzyme catalyses [protein-PII]-L-tyrosine + UTP = [protein-PII]-uridylyl-L-tyrosine + diphosphate. The catalysed reaction is [protein-PII]-uridylyl-L-tyrosine + H2O = [protein-PII]-L-tyrosine + UMP + H(+). With respect to regulation, uridylyltransferase (UTase) activity is inhibited by glutamine, while glutamine activates uridylyl-removing (UR) activity. Its function is as follows. Modifies, by uridylylation and deuridylylation, the PII regulatory proteins (GlnB and homologs), in response to the nitrogen status of the cell that GlnD senses through the glutamine level. Under low glutamine levels, catalyzes the conversion of the PII proteins and UTP to PII-UMP and PPi, while under higher glutamine levels, GlnD hydrolyzes PII-UMP to PII and UMP (deuridylylation). Thus, controls uridylylation state and activity of the PII proteins, and plays an important role in the regulation of nitrogen assimilation and metabolism. The polypeptide is Bifunctional uridylyltransferase/uridylyl-removing enzyme (Haemophilus influenzae (strain PittEE)).